Here is a 555-residue protein sequence, read N- to C-terminus: O-fucosyltransferase 20 (555 aa).

Topologically, residues 1–58 (MALPKNGGNSSSTKKKVSYISVPSQIINSLSSSSLQSLLVSPKKSSRCTNRFSYRNPR) are cytoplasmic. The chain crosses the membrane as a helical; Signal-anchor for type II membrane protein span at residues 59 to 79 (IWFLTLFLVSLFGMLKLGLNV). Topologically, residues 80–555 (DPISLPFSRY…MCSDRRQQQQ (476 aa)) are lumenal. Residues 110–130 (KNDTQSSSSSEHRKNETLPTE) form a disordered region. Asn111 and Asn124 each carry an N-linked (GlcNAc...) asparagine glycan. 330 to 332 (HLR) serves as a coordination point for substrate. N-linked (GlcNAc...) asparagine glycans are attached at residues Asn371 and Asn503. A disordered region spans residues 525 to 555 (QPELRTGRGGKDVTKHPVSECMCSDRRQQQQ). Positions 529–555 (RTGRGGKDVTKHPVSECMCSDRRQQQQ) are enriched in basic and acidic residues.

The protein belongs to the glycosyltransferase GT106 family. In terms of tissue distribution, highly expressed in embryogenic microspore and in vegetative tissues.

The protein resides in the golgi apparatus membrane. Its pathway is glycan metabolism. Its function is as follows. May play a role in the biosynthesis of matrix polysaccharides and contribute to the biomechanics and development of the plant cell wall. The sequence is that of O-fucosyltransferase 20 from Brassica napus (Rape).